The following is an 84-amino-acid chain: U8-theraphotoxin-Hhn1f (84 aa).

A signal peptide spans Met1 to Cys21. 5 disulfide bridges follow: Cys23/Cys35, Cys29/Cys44, Cys34/Cys67, Cys54/Cys75, and Cys69/Cys81.

It belongs to the AVIT (prokineticin) family. Expressed by the venom gland.

It localises to the secreted. The chain is U8-theraphotoxin-Hhn1f from Cyriopagopus hainanus (Chinese bird spider).